Here is a 298-residue protein sequence, read N- to C-terminus: Ribosomal RNA small subunit methyltransferase H (298 aa).

S-adenosyl-L-methionine-binding positions include 35-37 (GGH), aspartate 55, phenylalanine 82, aspartate 100, and glutamine 107.

This sequence belongs to the methyltransferase superfamily. RsmH family.

It localises to the cytoplasm. It catalyses the reaction cytidine(1402) in 16S rRNA + S-adenosyl-L-methionine = N(4)-methylcytidine(1402) in 16S rRNA + S-adenosyl-L-homocysteine + H(+). In terms of biological role, specifically methylates the N4 position of cytidine in position 1402 (C1402) of 16S rRNA. The chain is Ribosomal RNA small subunit methyltransferase H from Chlamydia abortus (strain DSM 27085 / S26/3) (Chlamydophila abortus).